We begin with the raw amino-acid sequence, 304 residues long: D-tagatose-1-phosphate kinase (304 aa).

The Proton acceptor role is filled by D250.

This sequence belongs to the carbohydrate kinase PfkB family. Requires Mg(2+) as cofactor.

The enzyme catalyses alpha-D-tagatopyranose 1-phosphate + ATP = D-tagatofuranose 1,6-bisphosphate + ADP + H(+). It participates in carbohydrate degradation. Activity is inhibited by tagatose-6-phosphate and fructose-6-phosphate. Kinase involved in a D-tagatose catabolic pathway. Catalyzes the phosphorylation of D-tagatose-1-phosphate (Tag-1P) to D-tagatose-1,6-bisphosphate. Can also use D-fructose-1-phosphate, with 40-fold lower catalytic efficiency, but not tagatose-6-phosphate or fructose-6-phosphate. The substrate, which occurs in a pyranose form in solution, may undergo a change to the furanose conformation after binding to the enzyme, in order to permit phosphorylation at C-6. The polypeptide is D-tagatose-1-phosphate kinase (Bacillus licheniformis (strain ATCC 14580 / DSM 13 / JCM 2505 / CCUG 7422 / NBRC 12200 / NCIMB 9375 / NCTC 10341 / NRRL NRS-1264 / Gibson 46)).